Reading from the N-terminus, the 639-residue chain is Threonine--tRNA ligase (639 aa).

A TGS domain is found at 1 to 61 (MIRITLPDNS…DHDARLQIIT (61 aa)). The segment at 242-533 (DHRRLGRELD…LIEQHAGALP (292 aa)) is catalytic. Residues C333, H384, and H510 each contribute to the Zn(2+) site.

The protein belongs to the class-II aminoacyl-tRNA synthetase family. Homodimer. Zn(2+) serves as cofactor.

It localises to the cytoplasm. It carries out the reaction tRNA(Thr) + L-threonine + ATP = L-threonyl-tRNA(Thr) + AMP + diphosphate + H(+). Functionally, catalyzes the attachment of threonine to tRNA(Thr) in a two-step reaction: L-threonine is first activated by ATP to form Thr-AMP and then transferred to the acceptor end of tRNA(Thr). Also edits incorrectly charged L-seryl-tRNA(Thr). This chain is Threonine--tRNA ligase, found in Paracidovorax citrulli (strain AAC00-1) (Acidovorax citrulli).